A 123-amino-acid polypeptide reads, in one-letter code: Small ribosomal subunit protein uS12cz/uS12cy/uS12cx/uS12w (123 aa).

Positions 1–13 are enriched in polar residues; it reads MPTSNQLLRNSRQ. Residues 1 to 30 are disordered; the sequence is MPTSNQLLRNSRQPVRKTKKTPALRGCPQR. Basic residues predominate over residues 14–30; it reads PVRKTKKTPALRGCPQR.

This sequence belongs to the universal ribosomal protein uS12 family. As to quaternary structure, part of the 30S ribosomal subunit.

The protein localises to the plastid. It localises to the chloroplast. In terms of biological role, with S4 and S5 plays an important role in translational accuracy. Located at the interface of the 30S and 50S subunits. The polypeptide is Small ribosomal subunit protein uS12cz/uS12cy/uS12cx/uS12w (rps12-A) (Pelargonium hortorum (Common geranium)).